Consider the following 227-residue polypeptide: Uracil-DNA glycosylase 2 (227 aa).

Aspartate 67 serves as the catalytic Proton acceptor.

The protein belongs to the uracil-DNA glycosylase (UDG) superfamily. UNG family.

It localises to the cytoplasm. It carries out the reaction Hydrolyzes single-stranded DNA or mismatched double-stranded DNA and polynucleotides, releasing free uracil.. Its function is as follows. Excises uracil residues from the DNA which can arise as a result of misincorporation of dUMP residues by DNA polymerase or due to deamination of cytosine. The polypeptide is Uracil-DNA glycosylase 2 (ung2) (Streptomyces coelicolor (strain ATCC BAA-471 / A3(2) / M145)).